The chain runs to 1234 residues: Coiled-coil domain-containing protein CG32809 (1234 aa).

Over residues 1 to 11 the composition is skewed to basic and acidic residues; the sequence is MLIRWKSKDKS. Disordered regions lie at residues 1–88, 107–129, and 330–350; these read MLIR…HAHQ, KNKK…FDDD, and KVSM…NYEE. Positions 12-25 are enriched in low complexity; it reads ASSNQSVGGSSSSS. The segment covering 55–69 has biased composition (basic and acidic residues); the sequence is GDERRRAMRRDDPRR. A coiled-coil region spans residues 412 to 436; it reads HRIRVEHMERQLANLTGLVQKALVN. The disordered stretch occupies residues 498–548; sequence DIQGIPKSHNPLHAAETKPTKPAIKSSTLPRTSSQERDRLKPPPPPKPIVL. Coiled-coil stretches lie at residues 565-594 and 630-666; these read EVYN…SQAQ and TRIS…EVIN. Disordered regions lie at residues 754-793, 815-852, 928-1011, and 1028-1070; these read EQRL…ALSG, IAQQ…DESA, LHSY…PPNQ, and SANA…ESGN. 5 stretches are compositionally biased toward low complexity: residues 817 to 837, 952 to 965, 993 to 1004, 1028 to 1039, and 1046 to 1068; these read QQQQ…QHQQ, TSSS…GSSS, TSSRSPLASPTS, SANANANANSNA, and VGET…GNES. Residues 1077–1105 adopt a coiled-coil conformation; that stretch reads VALEMRHQELLKKQKMLQEQYQRLQQMSK.

This chain is Coiled-coil domain-containing protein CG32809, found in Drosophila melanogaster (Fruit fly).